A 186-amino-acid chain; its full sequence is Alpha/beta-gliadin clone PTO-A10 (186 aa).

Residues 1–20 (PQPQPQYSQPQQPISQQQQQ) form a disordered region.

This sequence belongs to the gliadin/glutenin family. Substrate of transglutaminase.

In terms of biological role, gliadin is the major seed storage protein in wheat. This is Alpha/beta-gliadin clone PTO-A10 from Triticum aestivum (Wheat).